Consider the following 142-residue polypeptide: Transcriptional regulator MraZ (142 aa).

2 SpoVT-AbrB domains span residues 5–47 and 76–119; these read EFTH…PLNE and ATDC…SAER.

It belongs to the MraZ family. In terms of assembly, forms oligomers.

It localises to the cytoplasm. The protein localises to the nucleoid. The polypeptide is Transcriptional regulator MraZ (Limosilactobacillus reuteri (strain DSM 20016) (Lactobacillus reuteri)).